The sequence spans 252 residues: 4-formylbenzenesulfonate dehydrogenase TsaC1/TsaC2 (252 aa).

Residues 9–36 (IVTG…LVAD) and D62 each bind NAD(+). Residue S142 participates in substrate binding. Residue Y155 is the Proton acceptor of the active site. Position 159 (K159) interacts with NAD(+).

Belongs to the short-chain dehydrogenases/reductases (SDR) family. As to quaternary structure, homodimer.

The catalysed reaction is 4-formylbenzenesulfonate + NAD(+) + H2O = 4-sulfobenzoate + NADH + 2 H(+). Functionally, involved in the toluene-4-sulfonate degradation pathway. Does not discriminate between the sulfonate and the carboxyl substituents and can also be involved in the p-toluenecarboxylate degradation pathway. This Comamonas testosteroni (Pseudomonas testosteroni) protein is 4-formylbenzenesulfonate dehydrogenase TsaC1/TsaC2 (tsaC1).